The following is a 263-amino-acid chain: Probable ribosomal RNA small subunit methyltransferase A (263 aa).

Residues Leu12, Gly37, Glu58, Asp83, and Asn100 each coordinate S-adenosyl-L-methionine.

Belongs to the class I-like SAM-binding methyltransferase superfamily. rRNA adenine N(6)-methyltransferase family. RsmA subfamily.

It is found in the cytoplasm. Specifically dimethylates two adjacent adenosines in the loop of a conserved hairpin near the 3'-end of 16S rRNA in the 30S particle. May play a critical role in biogenesis of 30S subunits. The polypeptide is Probable ribosomal RNA small subunit methyltransferase A (Methanococcus maripaludis (strain C6 / ATCC BAA-1332)).